The primary structure comprises 803 residues: Phenylalanine--tRNA ligase beta subunit (803 aa).

Residues 40–153 (ASLDRRIVVG…SSWEIGKPFA (114 aa)) enclose the tRNA-binding domain. The B5 domain maps to 400–476 (ADLQLLALRP…RLYGYNAIES (77 aa)). Positions 454, 460, 463, and 464 each coordinate Mg(2+). One can recognise an FDX-ACB domain in the interval 709–801 (SRFPVVERDI…AESKLGAVIR (93 aa)).

Belongs to the phenylalanyl-tRNA synthetase beta subunit family. Type 1 subfamily. As to quaternary structure, tetramer of two alpha and two beta subunits. Mg(2+) serves as cofactor.

It is found in the cytoplasm. It carries out the reaction tRNA(Phe) + L-phenylalanine + ATP = L-phenylalanyl-tRNA(Phe) + AMP + diphosphate + H(+). This is Phenylalanine--tRNA ligase beta subunit from Chlorobium chlorochromatii (strain CaD3).